The sequence spans 346 residues: Methylthioribose-1-phosphate isomerase (346 aa).

Substrate is bound by residues 48–50, Arg-91, and Gln-200; that span reads RGA. Residue Asp-241 is the Proton donor of the active site. A substrate-binding site is contributed by 251 to 252; sequence NK.

Belongs to the eIF-2B alpha/beta/delta subunits family. MtnA subfamily.

It carries out the reaction 5-(methylsulfanyl)-alpha-D-ribose 1-phosphate = 5-(methylsulfanyl)-D-ribulose 1-phosphate. It functions in the pathway amino-acid biosynthesis; L-methionine biosynthesis via salvage pathway; L-methionine from S-methyl-5-thio-alpha-D-ribose 1-phosphate: step 1/6. Functionally, catalyzes the interconversion of methylthioribose-1-phosphate (MTR-1-P) into methylthioribulose-1-phosphate (MTRu-1-P). The polypeptide is Methylthioribose-1-phosphate isomerase (Picosynechococcus sp. (strain ATCC 27264 / PCC 7002 / PR-6) (Agmenellum quadruplicatum)).